A 753-amino-acid chain; its full sequence is 5-methyltetrahydropteroyltriglutamate--homocysteine methyltransferase (753 aa).

5-methyltetrahydropteroyltri-L-glutamate contacts are provided by residues 17-20 (RELK) and Lys117. L-homocysteine-binding positions include 431–433 (IGS) and Glu484. Residues 431 to 433 (IGS) and Glu484 contribute to the L-methionine site. 5-methyltetrahydropteroyltri-L-glutamate is bound by residues 515–516 (RC) and Trp561. Residue Asp599 participates in L-homocysteine binding. Position 599 (Asp599) interacts with L-methionine. Glu605 contacts 5-methyltetrahydropteroyltri-L-glutamate. Residues His641, Cys643, and Glu665 each coordinate Zn(2+). His694 acts as the Proton donor in catalysis. Cys726 contributes to the Zn(2+) binding site.

The protein belongs to the vitamin-B12 independent methionine synthase family. Zn(2+) serves as cofactor.

The catalysed reaction is 5-methyltetrahydropteroyltri-L-glutamate + L-homocysteine = tetrahydropteroyltri-L-glutamate + L-methionine. Its pathway is amino-acid biosynthesis; L-methionine biosynthesis via de novo pathway; L-methionine from L-homocysteine (MetE route): step 1/1. Catalyzes the transfer of a methyl group from 5-methyltetrahydrofolate to homocysteine resulting in methionine formation. The polypeptide is 5-methyltetrahydropteroyltriglutamate--homocysteine methyltransferase (Escherichia coli O6:H1 (strain CFT073 / ATCC 700928 / UPEC)).